Here is a 55-residue protein sequence, read N- to C-terminus: ATP synthase protein 8 (55 aa).

The chain crosses the membrane as a helical span at residues 7-24; that stretch reads NPWFFIMIISWLTYSMII. The disordered stretch occupies residues 34 to 55; it reads TNPPARKEPTTNTTTPWNWPWT. The span at 43 to 55 shows a compositional bias: low complexity; the sequence is TTNTTTPWNWPWT.

Belongs to the ATPase protein 8 family. In terms of assembly, F-type ATPases have 2 components, CF(1) - the catalytic core - and CF(0) - the membrane proton channel.

Its subcellular location is the mitochondrion membrane. Mitochondrial membrane ATP synthase (F(1)F(0) ATP synthase or Complex V) produces ATP from ADP in the presence of a proton gradient across the membrane which is generated by electron transport complexes of the respiratory chain. F-type ATPases consist of two structural domains, F(1) - containing the extramembraneous catalytic core and F(0) - containing the membrane proton channel, linked together by a central stalk and a peripheral stalk. During catalysis, ATP synthesis in the catalytic domain of F(1) is coupled via a rotary mechanism of the central stalk subunits to proton translocation. Part of the complex F(0) domain. Minor subunit located with subunit a in the membrane. The sequence is that of ATP synthase protein 8 (MT-ATP8) from Vireo altiloquus (Black-whiskered vireo).